Here is a 260-residue protein sequence, read N- to C-terminus: Diphthine synthase (260 aa).

S-adenosyl-L-methionine is bound by residues Leu9, Asp85, Ile88, 113–114, Leu168, Ala208, and His233; that span reads TA.

This sequence belongs to the diphthine synthase family. In terms of assembly, homodimer.

It carries out the reaction 2-[(3S)-amino-3-carboxypropyl]-L-histidyl-[translation elongation factor 2] + 3 S-adenosyl-L-methionine = diphthine-[translation elongation factor 2] + 3 S-adenosyl-L-homocysteine + 3 H(+). It functions in the pathway protein modification; peptidyl-diphthamide biosynthesis. S-adenosyl-L-methionine-dependent methyltransferase that catalyzes the trimethylation of the amino group of the modified target histidine residue in translation elongation factor 2 (EF-2), to form an intermediate called diphthine. The three successive methylation reactions represent the second step of diphthamide biosynthesis. The chain is Diphthine synthase from Halobacterium salinarum (strain ATCC 29341 / DSM 671 / R1).